The primary structure comprises 334 residues: MKPKVFITREIPEVGIKMLEDEFEVEVWGDEKEIPREILLKKVKEVDALVTMLSERIDKEVFENAPKLRIVANYAVGYDNIDIEEATKRGIYVTNTPDVLTDATADLAFALLLATARHVVKGDRFVRSGEWKKRGVAWHPKWFLGYDVYGKTIGIIGLGRIGQAIAKRAKGFNMRILYYSRTRKEEVERELNAEFKPLEDLLRESDFVVLAVPLTRETYHLINEERLKLMKKTAILINIARGKVVDTNALVKALKEGWIAGAGLDVFEEEPYYNEELFKLDNVVLTPHIGSASFGAREGMAELVAKNLIAFKRGEIPPTLVNREVIKIRKPGFE.

Residues 158–161 (LGRI), 180–182 (SRT), and 239–241 (IAR) each bind NADP(+). Active-site residues include R241 and E270. H288 (proton donor) is an active-site residue. 288-290 (HIG) provides a ligand contact to NADP(+).

It belongs to the D-isomer specific 2-hydroxyacid dehydrogenase family. GyaR subfamily. As to quaternary structure, homodimer.

Its subcellular location is the cytoplasm. The catalysed reaction is glycolate + NAD(+) = glyoxylate + NADH + H(+). This is Glyoxylate reductase (gyaR) from Pyrococcus horikoshii (strain ATCC 700860 / DSM 12428 / JCM 9974 / NBRC 100139 / OT-3).